The primary structure comprises 259 residues: Formate channel BtFdhC (259 aa).

Residues 1-26 are Cytoplasmic-facing; that stretch reads MAFHKPEQIAELVIEAGVQKVSQTLP. Residues 27–47 traverse the membrane as a helical segment; sequence AMLILGFLGGAFISLGFLLNI. The Periplasmic portion of the chain corresponds to 48-66; sequence RVLGNLPERWGSLVNVLGG. The helical transmembrane segment at 67 to 97 threads the bilayer; it reads AVFPVGLMLVVLAGGELITGNMMSLSMALYA. At 98–108 the chain is on the cytoplasmic side; it reads KKITLVSVLNN. Residues 109–130 traverse the membrane as a helical segment; that stretch reads WVWITFMNFVGAIFVAYCFGHL. Residues 131-157 lie on the Periplasmic side of the membrane; it reads GGLTEGDYLNKTVAIAEGKLHESFGRT. Residues 158 to 176 traverse the membrane as a helical segment; the sequence is LILAIGCNWLVCLALWLAY. At 177–187 the chain is on the cytoplasmic side; that stretch reads GTSDFVGKIIG. Residues 188–216 traverse the membrane as a helical segment; sequence IWIPIMAFVVIGFQQVVANMFVISAVIFA. Topologically, residues 217-227 are periplasmic; that stretch reads GHLTWMDLARN. A helical transmembrane segment spans residues 228-250; that stretch reads FVPVFIGNVIGGAGFVGFAYFAC. The Cytoplasmic segment spans residues 251 to 259; it reads YQKQHSNMK.

This sequence belongs to the FNT transporter (TC 1.A.16) family.

It localises to the cell inner membrane. It carries out the reaction formate(in) = formate(out). In terms of biological role, acts as a formate transporter. This Bacillus thuringiensis protein is Formate channel BtFdhC.